We begin with the raw amino-acid sequence, 155 residues long: Short-chain-enoyl-CoA hydratase (155 aa).

It belongs to the enoyl-CoA hydratase/isomerase family.

It carries out the reaction a short-chain (3S)-3-hydroxyacyl-CoA = a short-chain (2E)-enoyl-CoA + H2O. It functions in the pathway lipid metabolism; butanoate metabolism. The chain is Short-chain-enoyl-CoA hydratase (crt) from Clostridioides difficile (Peptoclostridium difficile).